A 134-amino-acid polypeptide reads, in one-letter code: Large ribosomal subunit protein uL16c (134 aa).

The protein belongs to the universal ribosomal protein uL16 family. In terms of assembly, part of the 50S ribosomal subunit.

Its subcellular location is the plastid. The protein localises to the chloroplast. The protein is Large ribosomal subunit protein uL16c of Atropa belladonna (Belladonna).